The following is a 74-amino-acid chain: Translation initiation factor IF-1 (74 aa).

The 72-residue stretch at 1-72 (MAKETEMEFE…TRGRITYRKI (72 aa)) folds into the S1-like domain.

It belongs to the IF-1 family. Component of the 30S ribosomal translation pre-initiation complex which assembles on the 30S ribosome in the order IF-2 and IF-3, IF-1 and N-formylmethionyl-tRNA(fMet); mRNA recruitment can occur at any time during PIC assembly.

It localises to the cytoplasm. Functionally, one of the essential components for the initiation of protein synthesis. Stabilizes the binding of IF-2 and IF-3 on the 30S subunit to which N-formylmethionyl-tRNA(fMet) subsequently binds. Helps modulate mRNA selection, yielding the 30S pre-initiation complex (PIC). Upon addition of the 50S ribosomal subunit IF-1, IF-2 and IF-3 are released leaving the mature 70S translation initiation complex. The sequence is that of Translation initiation factor IF-1 from Mycoplasma capricolum subsp. capricolum (strain California kid / ATCC 27343 / NCTC 10154).